The sequence spans 644 residues: Large subunit GTPase 1 homolog (644 aa).

The disordered stretch occupies residues 1 to 31; it reads MGRRRAPGGGSLGRVLIRQQTQRSRSHRHTD. Serine 93 and serine 97 each carry phosphoserine. Positions 164-430 constitute a CP-type G domain; that stretch reads WRQLWRVIER…LCDCPGLVMP (267 aa). 212-215 lines the GTP pocket; it reads NKAD. Residues 253 to 345 are disordered; it reads KEEVDSVAGD…KNAENQQVNN (93 aa). Residues 302–326 are compositionally biased toward acidic residues; that stretch reads CQEDEEEDWQTCSEEDSVPEEEEGC. GTP is bound by residues 379-386 and 423-426; these read GYPNVGKS and DCPG. The disordered stretch occupies residues 618–644; that stretch reads VPGKPWKKHGNRNKKEKSRRLYKHLDV. Residues 622–644 are compositionally biased toward basic residues; that stretch reads PWKKHGNRNKKEKSRRLYKHLDV.

The protein belongs to the TRAFAC class YlqF/YawG GTPase family. LSG1 subfamily.

The protein resides in the cytoplasm. It is found in the endoplasmic reticulum. Its subcellular location is the nucleus. It localises to the cajal body. The catalysed reaction is GTP + H2O = GDP + phosphate + H(+). Functions as a GTPase. May act by mediating the release of NMD3 from the 60S ribosomal subunit after export into the cytoplasm during the 60S ribosomal subunit maturation. The sequence is that of Large subunit GTPase 1 homolog from Mus musculus (Mouse).